The primary structure comprises 234 residues: Small ribosomal subunit protein uS3 (234 aa).

The 71-residue stretch at 39–109 (IRTLINKHYG…EVRIAIYEVK (71 aa)) folds into the KH type-2 domain.

Belongs to the universal ribosomal protein uS3 family. Part of the 30S ribosomal subunit. Forms a tight complex with proteins S10 and S14.

Its function is as follows. Binds the lower part of the 30S subunit head. Binds mRNA in the 70S ribosome, positioning it for translation. The sequence is that of Small ribosomal subunit protein uS3 from Coprothermobacter proteolyticus (strain ATCC 35245 / DSM 5265 / OCM 4 / BT).